Reading from the N-terminus, the 286-residue chain is Citrullinase (286 aa).

In terms of domain architecture, CN hydrolase spans 4 to 258 (IKVAVVQLSF…DDILYATFDF (255 aa)). Catalysis depends on Glu-43, which acts as the Proton acceptor. Lys-116 is an active-site residue. The Nucleophile role is filled by Cys-153.

This sequence belongs to the carbon-nitrogen hydrolase superfamily.

It catalyses the reaction L-citrulline + H2O + 2 H(+) = L-ornithine + NH4(+) + CO2. Functionally, catalyzes the degradation of citrulline into ornithine, carbon dioxide and ammonia. Contributes to intramacrophage survival, in vivo growth and pathogenesis. The chain is Citrullinase from Francisella tularensis subsp. tularensis (strain SCHU S4 / Schu 4).